We begin with the raw amino-acid sequence, 54 residues long: Ovomucoid (54 aa).

Residues 4 to 54 (VDCSDYPKPACSLDYMPLCGSDSKTYSNKCNFCNAVVDSNGTLTLSHFEKC) form the Kazal-like domain. Intrachain disulfides connect Cys6-Cys36, Cys14-Cys33, and Cys22-Cys54. Asn43 carries an N-linked (GlcNAc...) asparagine glycan.

Its subcellular location is the secreted. This Chroicocephalus ridibundus (Black-headed gull) protein is Ovomucoid.